The primary structure comprises 93 residues: DNA-directed RNA polymerase subunit omega (93 aa).

Belongs to the RNA polymerase subunit omega family. As to quaternary structure, the RNAP catalytic core consists of 2 alpha, 1 beta, 1 beta' and 1 omega subunit. When a sigma factor is associated with the core the holoenzyme is formed, which can initiate transcription.

It carries out the reaction RNA(n) + a ribonucleoside 5'-triphosphate = RNA(n+1) + diphosphate. Functionally, promotes RNA polymerase assembly. Latches the N- and C-terminal regions of the beta' subunit thereby facilitating its interaction with the beta and alpha subunits. The polypeptide is DNA-directed RNA polymerase subunit omega (Glaesserella parasuis serovar 5 (strain SH0165) (Haemophilus parasuis)).